The sequence spans 33 residues: Omega-conotoxin-like Vn2 (33 aa).

Disulfide bonds link Cys3–Cys20, Cys10–Cys24, and Cys19–Cys28. Pro33 bears the Proline amide mark.

As to expression, expressed by the venom duct.

Its subcellular location is the secreted. Its function is as follows. Omega-conotoxins act at presynaptic membranes, they bind and block voltage-gated calcium channels (Cav). Has strong insecticidal properties at a dose of only 100 pmol/g of body weight (when injected into the haemocoel of the wax moth G.mellonella larvae). Provoques tremor and uncontrolled movements in insect larvae, that are typical symptoms caused by neurotoxins. On fish G.niger, intraperitoneal injection of the toxin causes full extension of the fins, change in posture, breathing difficulties (at 30 and 100 pmol/g body weight) and death (at 100 pmol/g body weight). This Conus ventricosus (Mediterranean cone) protein is Omega-conotoxin-like Vn2.